The chain runs to 393 residues: S-adenosylmethionine synthase 3 (393 aa).

Residue glutamate 43 participates in K(+) binding. Glutamate 56 and glutamine 99 together coordinate L-methionine. Residues aspartate 167–lysine 169, serine 235–phenylalanine 238, aspartate 246, arginine 252–lysine 253, alanine 269, lysine 273, and lysine 277 each bind ATP. Residue aspartate 246 participates in L-methionine binding. Residue lysine 277 coordinates L-methionine.

Belongs to the AdoMet synthase family. In terms of assembly, homotetramer. It depends on Mn(2+) as a cofactor. Requires Mg(2+) as cofactor. The cofactor is Co(2+). K(+) is required as a cofactor.

The protein resides in the cytoplasm. The enzyme catalyses L-methionine + ATP + H2O = S-adenosyl-L-methionine + phosphate + diphosphate. Its pathway is amino-acid biosynthesis; S-adenosyl-L-methionine biosynthesis; S-adenosyl-L-methionine from L-methionine: step 1/1. Functionally, catalyzes the formation of S-adenosylmethionine from methionine and ATP. The reaction comprises two steps that are both catalyzed by the same enzyme: formation of S-adenosylmethionine (AdoMet) and triphosphate, and subsequent hydrolysis of the triphosphate. In Actinidia chinensis var. chinensis (Chinese soft-hair kiwi), this protein is S-adenosylmethionine synthase 3 (SAM3).